The sequence spans 415 residues: MKKRIGIVGAGTAGLHLGLFLRQHDVDVTVYTDRKPDEYSGLRLLNTVAHNAVTVQREVALDVNEWPSEEFGYFGHYYYVGGPQPMRFYGDLKAPSRAVDYRLYQPMLMRALEARGGKFCYDAVSAEDLEGLSEQYDLLVVCTGKYALGKVFEKQSENSPFEKPQRALCVGLFKGIKEAPIRAVTMSFSPGHGELIEIPTLSFNGMSTALVLENHIGSDLEVLAHTKYDDDPRAFLDLMLEKLGKHHPSVAERIDPAEFDLANSSLDILQGGVVPAFRDGHATLNNGKTIIGLGDIQATVDPVLGQGANMASYAAWILGEEILAHSVYDLRFSEHLERRRQDRVLCATRWTNFTLSALSALPPEFLAFLQILSQSREMADEFTDNFNYPERQWDRFSSPERIGQWCSQFAPTIAA.

It belongs to the StyA family. Homodimer. A direct interaction with the monooxygenase reductase component StyB seems not to be necessary for the enzymatic activity.

The enzyme catalyses styrene + FADH2 + O2 = (S)-styrene oxide + FAD + H2O + H(+). It participates in aromatic compound metabolism. In terms of biological role, styrene monooxygenase which catalyzes the first step in the aerobic styrene degradation pathway by enantioselective epoxidation of the vinyl side chain. In a two-component system, a reductase utilizes NADH to reduce FAD, which is then transferred to the oxygenase; the electron transfer is proposed to occur via a diffusing flavin. The sequence is that of Styrene monooxygenase StyA (styA) from Pseudomonas sp.